We begin with the raw amino-acid sequence, 528 residues long: Lanosterol 14-alpha demethylase (528 aa).

Cys-470 serves as a coordination point for heme.

The protein belongs to the cytochrome P450 family. Heme serves as cofactor.

It is found in the membrane. The catalysed reaction is a 14alpha-methyl steroid + 3 reduced [NADPH--hemoprotein reductase] + 3 O2 = a Delta(14) steroid + formate + 3 oxidized [NADPH--hemoprotein reductase] + 4 H2O + 4 H(+). It catalyses the reaction a 14alpha-methyl steroid + reduced [NADPH--hemoprotein reductase] + O2 = a 14alpha-hydroxymethyl steroid + oxidized [NADPH--hemoprotein reductase] + H2O + H(+). The enzyme catalyses a 14alpha-hydroxymethyl steroid + reduced [NADPH--hemoprotein reductase] + O2 = a 14alpha-formyl steroid + oxidized [NADPH--hemoprotein reductase] + 2 H2O + H(+). It carries out the reaction a 14alpha-formyl steroid + reduced [NADPH--hemoprotein reductase] + O2 = a Delta(14) steroid + formate + oxidized [NADPH--hemoprotein reductase] + H2O + 2 H(+). The catalysed reaction is lanosterol + 3 reduced [NADPH--hemoprotein reductase] + 3 O2 = 4,4-dimethyl-5alpha-cholesta-8,14,24-trien-3beta-ol + formate + 3 oxidized [NADPH--hemoprotein reductase] + 4 H2O + 4 H(+). It catalyses the reaction lanosterol + reduced [NADPH--hemoprotein reductase] + O2 = 32-hydroxylanosterol + oxidized [NADPH--hemoprotein reductase] + H2O + H(+). The enzyme catalyses 32-hydroxylanosterol + reduced [NADPH--hemoprotein reductase] + O2 = 32-oxolanosterol + oxidized [NADPH--hemoprotein reductase] + 2 H2O + H(+). It carries out the reaction 32-oxolanosterol + reduced [NADPH--hemoprotein reductase] + O2 = 4,4-dimethyl-5alpha-cholesta-8,14,24-trien-3beta-ol + formate + oxidized [NADPH--hemoprotein reductase] + H2O + 2 H(+). The catalysed reaction is eburicol + 3 reduced [NADPH--hemoprotein reductase] + 3 O2 = 14-demethyleburicol + formate + 3 oxidized [NADPH--hemoprotein reductase] + 4 H2O + 4 H(+). It catalyses the reaction eburicol + reduced [NADPH--hemoprotein reductase] + O2 = 32-hydroxyeburicol + oxidized [NADPH--hemoprotein reductase] + H2O + H(+). The enzyme catalyses 32-hydroxyeburicol + reduced [NADPH--hemoprotein reductase] + O2 = 32-oxoeburicol + oxidized [NADPH--hemoprotein reductase] + 2 H2O + H(+). It carries out the reaction 32-oxoeburicol + reduced [NADPH--hemoprotein reductase] + O2 = 14-demethyleburicol + formate + oxidized [NADPH--hemoprotein reductase] + H2O + 2 H(+). The protein operates within steroid biosynthesis; zymosterol biosynthesis; zymosterol from lanosterol: step 1/6. Functionally, sterol 14alpha-demethylase that plays a critical role in the third module of ergosterol biosynthesis pathway, being ergosterol the major sterol component in fungal membranes that participates in a variety of functions. The third module or late pathway involves the ergosterol synthesis itself through consecutive reactions that mainly occur in the endoplasmic reticulum (ER) membrane. In filamentous fungi, during the initial step of this module, lanosterol (lanosta-8,24-dien-3beta-ol) can be metabolized to eburicol. Sterol 14alpha-demethylase catalyzes the three-step oxidative removal of the 14alpha-methyl group (C-32) of both these sterols in the form of formate, and converts eburicol and lanosterol to 14-demethyleburicol (4,4,24-trimethylergosta-8,14,24(28)-trienol) and 4,4-dimethyl-5alpha-cholesta-8,14,24-trien-3beta-ol, respectively, which are further metabolized by other enzymes in the pathway to ergosterol. Can also use substrates not intrinsic to fungi, such as 24,25-dihydrolanosterol (DHL), producing 4,4-dimethyl-8,14-cholestadien-3-beta-ol, but at lower rates than the endogenous substrates. This is Lanosterol 14-alpha demethylase (ERG11) from Candida tropicalis (Yeast).